The following is a 142-amino-acid chain: FAD synthase (142 aa).

ATP contacts are provided by residues 9 to 10 (TF), 14 to 17 (HPGH), and Asp-92.

The protein belongs to the archaeal FAD synthase family. As to quaternary structure, homodimer. It depends on a divalent metal cation as a cofactor.

The catalysed reaction is FMN + ATP + H(+) = FAD + diphosphate. Its pathway is cofactor biosynthesis; FAD biosynthesis; FAD from FMN: step 1/1. In terms of biological role, catalyzes the transfer of the AMP portion of ATP to flavin mononucleotide (FMN) to produce flavin adenine dinucleotide (FAD) coenzyme. The chain is FAD synthase from Methanohalophilus mahii (strain ATCC 35705 / DSM 5219 / SLP).